Reading from the N-terminus, the 207-residue chain is MRAIRMLLVSALAMGAVSAHADEKDVARLTQLLEKSQTITARFSQLTLDASGTSLQEANGEMAVKRPGLFYWHTDAPQEQVVVSDGQKVTLWDPDLEQATIKKLDVRLSQTPALLLSGDVSKISQSFDISSKEQGEVTDFTLKPKTKDTLFDSLRVSFRKGLINDMQLVDSVGQRTNILFNGVKANEAIPASKFKFDVPKGADVIQE.

The first 21 residues, 1–21 (MRAIRMLLVSALAMGAVSAHA), serve as a signal peptide directing secretion.

The protein belongs to the LolA family. Monomer.

The protein localises to the periplasm. Functionally, participates in the translocation of lipoproteins from the inner membrane to the outer membrane. Only forms a complex with a lipoprotein if the residue after the N-terminal Cys is not an aspartate (The Asp acts as a targeting signal to indicate that the lipoprotein should stay in the inner membrane). The chain is Outer-membrane lipoprotein carrier protein from Pseudomonas entomophila (strain L48).